The chain runs to 335 residues: Glycerol-3-phosphate dehydrogenase [NAD(P)+] (335 aa).

NADPH contacts are provided by Trp14, Arg33, and Lys111. Lys111, Gly140, and Ser142 together coordinate sn-glycerol 3-phosphate. Residue Ala144 participates in NADPH binding. Sn-glycerol 3-phosphate is bound by residues Lys195, Asp248, Ser258, Arg259, and Asn260. Lys195 functions as the Proton acceptor in the catalytic mechanism. Position 259 (Arg259) interacts with NADPH. Residues Val283 and Glu285 each contribute to the NADPH site.

This sequence belongs to the NAD-dependent glycerol-3-phosphate dehydrogenase family.

The protein resides in the cytoplasm. The enzyme catalyses sn-glycerol 3-phosphate + NAD(+) = dihydroxyacetone phosphate + NADH + H(+). It catalyses the reaction sn-glycerol 3-phosphate + NADP(+) = dihydroxyacetone phosphate + NADPH + H(+). It functions in the pathway membrane lipid metabolism; glycerophospholipid metabolism. Functionally, catalyzes the reduction of the glycolytic intermediate dihydroxyacetone phosphate (DHAP) to sn-glycerol 3-phosphate (G3P), the key precursor for phospholipid synthesis. The chain is Glycerol-3-phosphate dehydrogenase [NAD(P)+] from Burkholderia mallei (strain NCTC 10247).